We begin with the raw amino-acid sequence, 223 residues long: Neurotrophic factor BDNF precursor form (223 aa).

A signal peptide spans 1–5 (SCMKA). Positions 6–114 (APMKEVSIRG…AANMSMRVRR (109 aa)) are excised as a propeptide. N-linked (GlcNAc...) asparagine glycosylation is present at N107. Intrachain disulfides connect C127–C194 and C172–C223.

Belongs to the NGF-beta family.

Its subcellular location is the secreted. In terms of biological role, promotes the survival of neuronal populations that are all located either in the central nervous system or directly connected to it. This chain is Neurotrophic factor BDNF precursor form (BDNF), found in Aspidites melanocephalus (Black-headed python).